The primary structure comprises 370 residues: sn-glycerol-3-phosphate import ATP-binding protein UgpC (370 aa).

Residues 4 to 235 form the ABC transporter domain; the sequence is LRLDGIRKRY…PATRFVASFL (232 aa). Position 37–44 (37–44) interacts with ATP; it reads GPSGCGKS.

Belongs to the ABC transporter superfamily. sn-glycerol-3-phosphate importer (TC 3.A.1.1.3) family. As to quaternary structure, the complex is composed of two ATP-binding proteins (UgpC), two transmembrane proteins (UgpA and UgpE) and a solute-binding protein (UgpB).

The protein localises to the cell inner membrane. The catalysed reaction is sn-glycerol 3-phosphate(out) + ATP + H2O = sn-glycerol 3-phosphate(in) + ADP + phosphate + H(+). Its function is as follows. Part of the ABC transporter complex UgpBAEC involved in sn-glycerol-3-phosphate (G3P) import. Responsible for energy coupling to the transport system. The protein is sn-glycerol-3-phosphate import ATP-binding protein UgpC of Chromohalobacter salexigens (strain ATCC BAA-138 / DSM 3043 / CIP 106854 / NCIMB 13768 / 1H11).